Reading from the N-terminus, the 602-residue chain is Proteasome-associated ATPase (602 aa).

Residues 13-89 (PDAAEVERLR…LREEVDRLGQ (77 aa)) adopt a coiled-coil conformation. Residue 289-294 (GCGKTL) coordinates ATP. The tract at residues 601–602 (YL) is docks into pockets in the proteasome alpha-ring.

This sequence belongs to the AAA ATPase family. Homohexamer. Assembles into a hexameric ring structure that caps the 20S proteasome core. Strongly interacts with the prokaryotic ubiquitin-like protein Pup through a hydrophobic interface; the interacting region of ARC lies in its N-terminal coiled-coil domain. There is one Pup binding site per ARC hexamer ring. Upon ATP-binding, the C-terminus of ARC interacts with the alpha-rings of the proteasome core, possibly by binding to the intersubunit pockets.

The protein operates within protein degradation; proteasomal Pup-dependent pathway. In terms of biological role, ATPase which is responsible for recognizing, binding, unfolding and translocation of pupylated proteins into the bacterial 20S proteasome core particle. May be essential for opening the gate of the 20S proteasome via an interaction with its C-terminus, thereby allowing substrate entry and access to the site of proteolysis. Thus, the C-termini of the proteasomal ATPase may function like a 'key in a lock' to induce gate opening and therefore regulate proteolysis. The polypeptide is Proteasome-associated ATPase (Mycobacteroides abscessus (strain ATCC 19977 / DSM 44196 / CCUG 20993 / CIP 104536 / JCM 13569 / NCTC 13031 / TMC 1543 / L948) (Mycobacterium abscessus)).